A 221-amino-acid polypeptide reads, in one-letter code: H-2 class II histocompatibility antigen, A-Q alpha chain (221 aa).

Residues 1–76 (GIVVYQSPGD…KRSNFTPATN (76 aa)) are alpha-1. Residues 1–183 (GIVVYQSPGD…IPAPMSELTE (183 aa)) lie on the Extracellular side of the membrane. The alpha-2 stretch occupies residues 77 to 170 (EAPQATVFPK…GLDEPVLKHW (94 aa)). One can recognise an Ig-like C1-type domain in the interval 79-171 (PQATVFPKSP…LDEPVLKHWE (93 aa)). A disulfide bridge connects residues cysteine 99 and cysteine 155. The N-linked (GlcNAc...) asparagine glycan is linked to asparagine 110. The segment at 171–183 (EPEIPAPMSELTE) is connecting peptide. Residues 184 to 209 (TVVCALGLSVGLVGIVVGTIFIIQGL) form a helical membrane-spanning segment. At 210–221 (RSGGTSRPPGPL) the chain is on the cytoplasmic side.

Belongs to the MHC class II family.

The protein localises to the membrane. This is H-2 class II histocompatibility antigen, A-Q alpha chain (H2-Aa) from Mus musculus (Mouse).